Reading from the N-terminus, the 87-residue chain is Small ribosomal subunit protein uS15 (87 aa).

This sequence belongs to the universal ribosomal protein uS15 family. As to quaternary structure, part of the 30S ribosomal subunit. Forms a bridge to the 50S subunit in the 70S ribosome, contacting the 23S rRNA.

Functionally, one of the primary rRNA binding proteins, it binds directly to 16S rRNA where it helps nucleate assembly of the platform of the 30S subunit by binding and bridging several RNA helices of the 16S rRNA. Its function is as follows. Forms an intersubunit bridge (bridge B4) with the 23S rRNA of the 50S subunit in the ribosome. The chain is Small ribosomal subunit protein uS15 from Acetivibrio thermocellus (strain ATCC 27405 / DSM 1237 / JCM 9322 / NBRC 103400 / NCIMB 10682 / NRRL B-4536 / VPI 7372) (Clostridium thermocellum).